The following is a 348-amino-acid chain: Sulfate/thiosulfate import ATP-binding protein CysA (348 aa).

An ABC transporter domain is found at 3–237; that stretch reads IRIQELCKQF…PSSPFVYSFV (235 aa). 35–42 is a binding site for ATP; it reads GPSGSGKT.

Belongs to the ABC transporter superfamily. Sulfate/tungstate importer (TC 3.A.1.6) family. In terms of assembly, the complex is composed of two ATP-binding proteins (CysA), two transmembrane proteins (CysT and CysW) and a solute-binding protein (CysP).

The protein resides in the cell inner membrane. It catalyses the reaction sulfate(out) + ATP + H2O = sulfate(in) + ADP + phosphate + H(+). The enzyme catalyses thiosulfate(out) + ATP + H2O = thiosulfate(in) + ADP + phosphate + H(+). Functionally, part of the ABC transporter complex CysAWTP involved in sulfate/thiosulfate import. Responsible for energy coupling to the transport system. The polypeptide is Sulfate/thiosulfate import ATP-binding protein CysA (Xylella fastidiosa (strain 9a5c)).